The sequence spans 339 residues: Adenylosuccinate synthetase (339 aa).

GTP is bound by residues 12 to 18 and 42 to 44; these read GDEGKGS and GHS. Asp13 acts as the Proton acceptor in catalysis. Positions 13 and 42 each coordinate Mg(2+). IMP-binding positions include 13–16, 40–43, Thr127, Arg141, Gln179, Thr194, and Arg256; these read DEGK and NAGH. Catalysis depends on His43, which acts as the Proton donor. Substrate is bound at residue 252–258; it reads TVTGRRR. Residues Arg258, 284-286, and 324-326 contribute to the GTP site; these read MLD and KTG.

The protein belongs to the adenylosuccinate synthetase family. Homodimer. Requires Mg(2+) as cofactor.

The protein localises to the cytoplasm. The enzyme catalyses IMP + L-aspartate + GTP = N(6)-(1,2-dicarboxyethyl)-AMP + GDP + phosphate + 2 H(+). Its pathway is purine metabolism; AMP biosynthesis via de novo pathway; AMP from IMP: step 1/2. In terms of biological role, plays an important role in the de novo pathway of purine nucleotide biosynthesis. Catalyzes the first committed step in the biosynthesis of AMP from IMP. This chain is Adenylosuccinate synthetase, found in Thermococcus sibiricus (strain DSM 12597 / MM 739).